The sequence spans 116 residues: Ribosome-binding factor A (116 aa).

The protein belongs to the RbfA family. Monomer. Binds 30S ribosomal subunits, but not 50S ribosomal subunits or 70S ribosomes.

The protein localises to the cytoplasm. In terms of biological role, one of several proteins that assist in the late maturation steps of the functional core of the 30S ribosomal subunit. Associates with free 30S ribosomal subunits (but not with 30S subunits that are part of 70S ribosomes or polysomes). Required for efficient processing of 16S rRNA. May interact with the 5'-terminal helix region of 16S rRNA. This Streptococcus agalactiae protein is Ribosome-binding factor A.